We begin with the raw amino-acid sequence, 332 residues long: Adenosine receptor A2b (332 aa).

Residues 1 to 8 (MQLETQDA) lie on the Extracellular side of the membrane. Residues 9–33 (LYVALELVIAALAVAGNVLVCAAVG) traverse the membrane as a helical segment. The Cytoplasmic portion of the chain corresponds to 34–43 (ASSALQTPTN). A helical membrane pass occupies residues 44–67 (YFLVSLATADVAVGLFAIPFAITI). Residues 68–78 (SLGFCTDFHSC) are Extracellular-facing. Cysteines 78 and 171 form a disulfide. Residues 79-101 (LFLACFVLVLTQSSIFSLLAVAV) traverse the membrane as a helical segment. At 102–121 (DRYLAIRVPLRYKGLVTGTR) the chain is on the cytoplasmic side. The chain crosses the membrane as a helical span at residues 122-144 (ARGIIAVLWVLAFGIGLTPFLGW). Residues 145–178 (NSKDRATSNCTEPGDGITNKSCCPVKCLFENVVP) lie on the Extracellular side of the membrane. N-linked (GlcNAc...) asparagine glycans are attached at residues N153 and N163. Residue E174 participates in adenosine binding. Residues 179-203 (MSYMVYFNFFGCVLPPLLIMMVIYI) form a helical membrane-spanning segment. The Cytoplasmic segment spans residues 204–235 (KIFMVACKQLQHMELMEHSRTTLQREIHAAKS). Residues 236-259 (LAMIVGIFALCWLPVHAINCITLF) traverse the membrane as a helical segment. Adenosine is bound at residue N254. Topologically, residues 260–267 (HPALAKDK) are extracellular. A helical transmembrane segment spans residues 268–291 (PKWVMNVAILLSHANSVVNPIVYA). Residues S279 and H280 each contribute to the adenosine site. Over 292–332 (YRNRDFRYSFHRIISRYVLCQTDTKGGSGQAGGQSTFSLSL) the chain is Cytoplasmic. C311 carries S-palmitoyl cysteine lipidation.

The protein belongs to the G-protein coupled receptor 1 family.

Its subcellular location is the cell membrane. In terms of biological role, receptor for adenosine. The activity of this receptor is mediated by G proteins which activate adenylyl cyclase. This chain is Adenosine receptor A2b (Adora2b), found in Rattus norvegicus (Rat).